A 137-amino-acid polypeptide reads, in one-letter code: Putative pre-16S rRNA nuclease (137 aa).

The protein belongs to the YqgF nuclease family.

The protein localises to the cytoplasm. Its function is as follows. Could be a nuclease involved in processing of the 5'-end of pre-16S rRNA. The chain is Putative pre-16S rRNA nuclease from Bacillus cereus (strain AH187).